The chain runs to 732 residues: Prolyl endopeptidase-like (732 aa).

Catalysis depends on charge relay system residues Ser-575, Asp-661, and His-707.

This sequence belongs to the peptidase S9A family. As to quaternary structure, homodimer.

It localises to the cytoplasm. It is found in the cytosol. In terms of biological role, serine peptidase whose precise substrate specificity remains unclear. Does not cleave peptides after a arginine or lysine residue. Regulates trans-Golgi network morphology and sorting by regulating the membrane binding of the AP-1 complex. May play a role in the regulation of synaptic vesicle exocytosis. This chain is Prolyl endopeptidase-like (PREPL), found in Gallus gallus (Chicken).